We begin with the raw amino-acid sequence, 363 residues long: Peptide chain release factor 2 (363 aa).

At Gln251 the chain carries N5-methylglutamine.

It belongs to the prokaryotic/mitochondrial release factor family. Post-translationally, methylated by PrmC. Methylation increases the termination efficiency of RF2.

The protein resides in the cytoplasm. Its function is as follows. Peptide chain release factor 2 directs the termination of translation in response to the peptide chain termination codons UGA and UAA. This Helicobacter pylori (strain ATCC 700392 / 26695) (Campylobacter pylori) protein is Peptide chain release factor 2 (prfB).